The following is a 116-amino-acid chain: Large ribosomal subunit protein bL17 (116 aa).

It belongs to the bacterial ribosomal protein bL17 family. As to quaternary structure, part of the 50S ribosomal subunit. Contacts protein L32.

The protein is Large ribosomal subunit protein bL17 of Gloeobacter violaceus (strain ATCC 29082 / PCC 7421).